The sequence spans 77 residues: Conotoxin Cl6.12 (77 aa).

Positions 1 to 20 (MKFYLLLTAALLLTAVIIEA) are cleaved as a signal peptide. Positions 21–36 (APTDHQDEARDLMREE) are excised as a propeptide. Disulfide bonds link C43–C58, C51–C62, and C57–C68.

As to expression, expressed by the venom duct.

Its subcellular location is the secreted. This chain is Conotoxin Cl6.12, found in Californiconus californicus (California cone).